The following is a 420-amino-acid chain: Serine--tRNA ligase (420 aa).

227–229 provides a ligand contact to L-serine; it reads TSE. Residues 258-260 and valine 274 contribute to the ATP site; that span reads RRE. Glutamate 281 is a binding site for L-serine. 345 to 348 lines the ATP pocket; that stretch reads EVTS. An L-serine-binding site is contributed by threonine 379.

This sequence belongs to the class-II aminoacyl-tRNA synthetase family. Type-1 seryl-tRNA synthetase subfamily. In terms of assembly, homodimer. The tRNA molecule binds across the dimer.

The protein localises to the cytoplasm. It carries out the reaction tRNA(Ser) + L-serine + ATP = L-seryl-tRNA(Ser) + AMP + diphosphate + H(+). The enzyme catalyses tRNA(Sec) + L-serine + ATP = L-seryl-tRNA(Sec) + AMP + diphosphate + H(+). It functions in the pathway aminoacyl-tRNA biosynthesis; selenocysteinyl-tRNA(Sec) biosynthesis; L-seryl-tRNA(Sec) from L-serine and tRNA(Sec): step 1/1. Functionally, catalyzes the attachment of serine to tRNA(Ser). Is also able to aminoacylate tRNA(Sec) with serine, to form the misacylated tRNA L-seryl-tRNA(Sec), which will be further converted into selenocysteinyl-tRNA(Sec). This chain is Serine--tRNA ligase, found in Acidothermus cellulolyticus (strain ATCC 43068 / DSM 8971 / 11B).